The primary structure comprises 150 residues: MQVLVDADACPAVIKDMLFRAARRAEICVTLVANQFLRTPPSPFIKAVQVPAGFDVADARIVELAEPGDLVITADIPLAAAVLDKGAHALDPRGNWFSRENIEERLSTRAMMDQLRSAGIDTGGPAPFSARDGKTFASQLDRFLARHGKP.

The protein belongs to the UPF0178 family.

The protein is UPF0178 protein BceJ2315_16760 of Burkholderia cenocepacia (strain ATCC BAA-245 / DSM 16553 / LMG 16656 / NCTC 13227 / J2315 / CF5610) (Burkholderia cepacia (strain J2315)).